Here is a 247-residue protein sequence, read N- to C-terminus: Small ribosomal subunit protein uS2 (247 aa).

The protein belongs to the universal ribosomal protein uS2 family.

The sequence is that of Small ribosomal subunit protein uS2 from Ralstonia nicotianae (strain ATCC BAA-1114 / GMI1000) (Ralstonia solanacearum).